The chain runs to 135 residues: UPF0201 protein TON_1346 (135 aa).

This sequence belongs to the UPF0201 family.

The chain is UPF0201 protein TON_1346 from Thermococcus onnurineus (strain NA1).